The primary structure comprises 98 residues: Aspartyl/glutamyl-tRNA(Asn/Gln) amidotransferase subunit C (98 aa).

It belongs to the GatC family. As to quaternary structure, heterotrimer of A, B and C subunits.

It catalyses the reaction L-glutamyl-tRNA(Gln) + L-glutamine + ATP + H2O = L-glutaminyl-tRNA(Gln) + L-glutamate + ADP + phosphate + H(+). The enzyme catalyses L-aspartyl-tRNA(Asn) + L-glutamine + ATP + H2O = L-asparaginyl-tRNA(Asn) + L-glutamate + ADP + phosphate + 2 H(+). Functionally, allows the formation of correctly charged Asn-tRNA(Asn) or Gln-tRNA(Gln) through the transamidation of misacylated Asp-tRNA(Asn) or Glu-tRNA(Gln) in organisms which lack either or both of asparaginyl-tRNA or glutaminyl-tRNA synthetases. The reaction takes place in the presence of glutamine and ATP through an activated phospho-Asp-tRNA(Asn) or phospho-Glu-tRNA(Gln). The polypeptide is Aspartyl/glutamyl-tRNA(Asn/Gln) amidotransferase subunit C (Paenarthrobacter aurescens (strain TC1)).